The sequence spans 857 residues: Glucans biosynthesis glucosyltransferase H (857 aa).

6 helical membrane passes run 142 to 162, 196 to 216, 515 to 535, 572 to 592, 606 to 626, and 682 to 702; these read ILLTLMIGQTLVAGWYMKGIL, ILILFGILFCWVSAGFWTALM, VFLTGVMSYLSAPLWFFFLVL, LFSTTIVLLFLPKLLSIILIW, TLSMLMEMLFSMLLAPVRMIF, and FLWWLAPIVGSLVLSIPVSVI.

This sequence belongs to the glycosyltransferase 2 family. OpgH subfamily.

Its subcellular location is the cell inner membrane. Its pathway is glycan metabolism; osmoregulated periplasmic glucan (OPG) biosynthesis. In terms of biological role, involved in the biosynthesis of osmoregulated periplasmic glucans (OPGs). The polypeptide is Glucans biosynthesis glucosyltransferase H (Pseudomonas putida (strain W619)).